A 365-amino-acid chain; its full sequence is Regulatory protein RapG (365 aa).

TPR repeat units follow at residues glycine 135–leucine 168, alanine 169–leucine 202, alanine 209–alanine 242, serine 244–arginine 284, and arginine 326–isoleucine 359.

The protein belongs to the Rap family.

Its subcellular location is the cytoplasm. With respect to regulation, inhibited by PhrG. In terms of biological role, involved in the regulation of expression of DegU-controlled genes. Inhibits the binding of DegU to the promoter regions of aprE, coding for an extracellular alkaline protease, and comK, a master regulator for development of genetic competence. RapG does not stimulate dephosphorylation of DegU-P. The polypeptide is Regulatory protein RapG (rapG) (Bacillus subtilis (strain 168)).